We begin with the raw amino-acid sequence, 459 residues long: ATP synthase subunit beta (459 aa).

149-156 contacts ATP; the sequence is GGAGVGKT.

It belongs to the ATPase alpha/beta chains family. In terms of assembly, F-type ATPases have 2 components, CF(1) - the catalytic core - and CF(0) - the membrane proton channel. CF(1) has five subunits: alpha(3), beta(3), gamma(1), delta(1), epsilon(1). CF(0) has three main subunits: a(1), b(2) and c(9-12). The alpha and beta chains form an alternating ring which encloses part of the gamma chain. CF(1) is attached to CF(0) by a central stalk formed by the gamma and epsilon chains, while a peripheral stalk is formed by the delta and b chains.

The protein resides in the cell inner membrane. The enzyme catalyses ATP + H2O + 4 H(+)(in) = ADP + phosphate + 5 H(+)(out). Produces ATP from ADP in the presence of a proton gradient across the membrane. The catalytic sites are hosted primarily by the beta subunits. The polypeptide is ATP synthase subunit beta (Pseudomonas syringae pv. syringae (strain B728a)).